The sequence spans 637 residues: Biosynthetic arginine decarboxylase (637 aa).

N6-(pyridoxal phosphate)lysine is present on lysine 101. Residue 286 to 296 coordinates substrate; the sequence is FDVGGGLAVDY.

This sequence belongs to the Orn/Lys/Arg decarboxylase class-II family. SpeA subfamily. The cofactor is Mg(2+). Pyridoxal 5'-phosphate is required as a cofactor.

It carries out the reaction L-arginine + H(+) = agmatine + CO2. The protein operates within amine and polyamine biosynthesis; agmatine biosynthesis; agmatine from L-arginine: step 1/1. In terms of biological role, catalyzes the biosynthesis of agmatine from arginine. The sequence is that of Biosynthetic arginine decarboxylase from Shewanella baltica (strain OS223).